Here is a 417-residue protein sequence, read N- to C-terminus: Putative F-box protein At3g58950 (417 aa).

In terms of domain architecture, F-box spans 1–53 (MDLFSSLPDEVLCHILSFLTTKEAALASVVSKRWRNQFALVPNLDIDEEGKRE).

In Arabidopsis thaliana (Mouse-ear cress), this protein is Putative F-box protein At3g58950.